Consider the following 443-residue polypeptide: MAETNSREEELLRRIQELELENEVLKKKVAEVEYDAKYPKIDENFCLDEYKRYGRQMIVPEFGSLKSQIKLKNSSILVVGAGGLGCPALLYLSAAGIGKIGIVDDDIVDISNLHRQVLHTTDSIGMFKCDSAKKYICKLNPHVIVKTYPVRLHNDNAFDIVNDYDIVLDCTDTPAIRYLINDVSVLCRKTIVSGSGLKSDGQLSILNFNNEGPCYRCFYPKPPSAESITTCSDGGVIGPCIGLLGVSMAVETIKVLTGFYTKDNFKPFLSMYTGYPQQSFRVFKMRGRSDKCSVCGSFPTVSKEAILNNEIDYVAFCGKVDSNVLTPEDRITVQQFSDIVTRQSKAPVLLDVRTKEQFQIAKLPNSINIEWDPTFKKLESLDKYLPEDFDKDTDPVFVVCRYGNDSQLATRKMKQELDFKNAKDIIGGLNKWSDIVNPKFPKY.

Residues glycine 83, aspartate 104, 111-115 (SNLHR), lysine 128, and 172-173 (DT) contribute to the ATP site. Residues cysteine 214 and cysteine 217 each contribute to the Zn(2+) site. Cysteine 231 (glycyl thioester intermediate; for adenylyltransferase activity) is an active-site residue. Positions 292 and 295 each coordinate Zn(2+). A Rhodanese domain is found at 343–441 (QSKAPVLLDV…WSDIVNPKFP (99 aa)). Cysteine 400 serves as the catalytic Cysteine persulfide intermediate; for sulfurtransferase activity.

This sequence in the N-terminal section; belongs to the HesA/MoeB/ThiF family. UBA4 subfamily. Requires Zn(2+) as cofactor.

It localises to the cytoplasm. It is found in the cytosol. The protein operates within tRNA modification; 5-methoxycarbonylmethyl-2-thiouridine-tRNA biosynthesis. In terms of biological role, plays a central role in 2-thiolation of mcm(5)S(2)U at tRNA wobble positions of cytosolic tRNA(Lys), tRNA(Glu) and tRNA(Gln). Acts by mediating the C-terminal thiocarboxylation of sulfur carrier URM1. Its N-terminus first activates URM1 as acyl-adenylate (-COAMP), then the persulfide sulfur on the catalytic cysteine is transferred to URM1 to form thiocarboxylation (-COSH) of its C-terminus. The reaction probably involves hydrogen sulfide that is generated from the persulfide intermediate and that acts as a nucleophile towards URM1. Subsequently, a transient disulfide bond is formed. Does not use thiosulfate as sulfur donor; NFS1 probably acting as a sulfur donor for thiocarboxylation reactions. Prior mcm(5) tRNA modification by the elongator complex is required for 2-thiolation. May also be involved in protein urmylation. In Scheffersomyces stipitis (strain ATCC 58785 / CBS 6054 / NBRC 10063 / NRRL Y-11545) (Yeast), this protein is Adenylyltransferase and sulfurtransferase UBA4.